The chain runs to 199 residues: Recombination protein RecR (199 aa).

The segment at 57–72 adopts a C4-type zinc-finger fold; that stretch reads CQKCRTFTEQSLCPIC. The Toprim domain occupies 81-176; that stretch reads DTLCVVETPA…AVSRIAHGVP (96 aa).

Belongs to the RecR family.

Functionally, may play a role in DNA repair. It seems to be involved in an RecBC-independent recombinational process of DNA repair. It may act with RecF and RecO. The chain is Recombination protein RecR from Shewanella amazonensis (strain ATCC BAA-1098 / SB2B).